The following is a 29-amino-acid chain: NAD-reducing hydrogenase HoxS subunit delta (29 aa).

Over residues 1-11 (MKHSEKNEIAS) the composition is skewed to basic and acidic residues. The tract at residues 1 to 29 (MKHSEKNEIASHELPTTPLDPVLAAGRES) is disordered.

Belongs to the [NiFe]/[NiFeSe] hydrogenase small subunit family. In terms of assembly, tetramer of an alpha and a gamma subunits (flavin-containing dimer), and a delta and a nickel-containing beta subunits (hydrogenase dimer). It depends on [4Fe-4S] cluster as a cofactor. Requires [3Fe-4S] cluster as cofactor. [2Fe-2S] cluster serves as cofactor. FMN is required as a cofactor. The cofactor is Ni(2+).

It localises to the cytoplasm. It carries out the reaction H2 + NAD(+) = NADH + H(+). This is NAD-reducing hydrogenase HoxS subunit delta (hoxY) from Rhodococcus opacus (Nocardia opaca).